The chain runs to 466 residues: 55 kDa erythrocyte membrane protein (466 aa).

Threonine 2 carries the N-acetylthreonine modification. Serine 19 carries the phosphoserine modification. A Phosphothreonine modification is found at threonine 49. Phosphoserine is present on residues serine 57 and serine 110. In terms of domain architecture, PDZ spans 71 to 152 (LIQFEKVTEE…MISLKVIPNQ (82 aa)). The SH3 domain occupies 158–228 (ALQMFMRAQF…PSPELQEWRV (71 aa)). Residue serine 243 is modified to Phosphoserine. The segment at 268–466 (VVSYEEVVRL…PQWVPVSWVY (199 aa)) is interaction with PALS1. The 170-residue stretch at 282-451 (RKTLVLIGAS…TLKTLQETFD (170 aa)) folds into the Guanylate kinase-like domain.

The protein belongs to the MAGUK family. As to quaternary structure, heterodimer with PALS1. Interacts with DLG5 and NF2. Interacts (via guanylate kinase-like domain) with WHRN (via third PDZ domain). Interacts with PALS1. Post-translationally, palmitoylated.

Its subcellular location is the cell membrane. It localises to the cell projection. It is found in the stereocilium. Functionally, essential regulator of neutrophil polarity. Regulates neutrophil polarization by regulating AKT1 phosphorylation through a mechanism that is independent of PIK3CG activity. This chain is 55 kDa erythrocyte membrane protein (MPP1), found in Bos taurus (Bovine).